The following is a 341-amino-acid chain: MASEAPPFWWDEPDWRALALAPAAWIYGRVSGRRLIRAVPPRVSLPVLCVGNFTVGGAGKTPTAIAFARGAIARGMKPGIVSRGYGGNYSGLHLVDPGHDGARHVGDEPLLLARHAAVALSPDRVKAAEYLKSLGCDFIIMDDGFQSARLHADFSLLVVDASRGIGNGRVIPAGPLRAPLTDQMRKTDALLCIGKGNGADFVIRQAARAGRPIYHAQLRPSSSATVAGRRWLAFAGIGNPDKFYESVRQAGGEVVETHSFADHYSFEPDDIRGLVDMARRQGLGLITTAKDHVRLATMPDVPPEFLSKLAVLDVDLEFDRTDALDHILDTVVERFKSRLHG.

Thr-54 to Thr-61 serves as a coordination point for ATP.

It belongs to the LpxK family.

It catalyses the reaction a lipid A disaccharide + ATP = a lipid IVA + ADP + H(+). The protein operates within glycolipid biosynthesis; lipid IV(A) biosynthesis; lipid IV(A) from (3R)-3-hydroxytetradecanoyl-[acyl-carrier-protein] and UDP-N-acetyl-alpha-D-glucosamine: step 6/6. Transfers the gamma-phosphate of ATP to the 4'-position of a tetraacyldisaccharide 1-phosphate intermediate (termed DS-1-P) to form tetraacyldisaccharide 1,4'-bis-phosphate (lipid IVA). This is Tetraacyldisaccharide 4'-kinase from Brucella ovis (strain ATCC 25840 / 63/290 / NCTC 10512).